A 441-amino-acid chain; its full sequence is Protein SPMIP7 (441 aa).

In terms of tissue distribution, testis specific. Expressed at the spermatid stage.

Its function is as follows. Essential for normal spermatogenesis. The chain is Protein SPMIP7 (Spmip7) from Mus musculus (Mouse).